Consider the following 128-residue polypeptide: Nucleoside diphosphate kinase B (128 aa).

The residue at position 1 (methionine 1) is an N-acetylmethionine. Residues lysine 9, phenylalanine 39, threonine 70, arginine 81, and asparagine 91 each coordinate ATP. Histidine 94 (pros-phosphohistidine intermediate) is an active-site residue.

This sequence belongs to the NDK family. The cofactor is Mg(2+).

It localises to the cytoplasm. The protein localises to the nucleus. Its subcellular location is the cell projection. The protein resides in the lamellipodium. It is found in the ruffle. The catalysed reaction is a 2'-deoxyribonucleoside 5'-diphosphate + ATP = a 2'-deoxyribonucleoside 5'-triphosphate + ADP. It catalyses the reaction a ribonucleoside 5'-diphosphate + ATP = a ribonucleoside 5'-triphosphate + ADP. Major role in the synthesis of nucleoside triphosphates other than ATP. This is Nucleoside diphosphate kinase B (nme2) from Merluccius australis australis (Austral hake).